The sequence spans 115 residues: MKMVVVIRNDLGMGKGKMVAQGGHAIIEAFLDAKRKNPRAVDEWLREGQKKVVVKVNSEKELIDIYNKARSEGLPCSIIRDAGHTQLEPGTLTAVAIGPEKDEKIDKITGHLKLL.

It belongs to the PTH2 family.

It is found in the cytoplasm. The enzyme catalyses an N-acyl-L-alpha-aminoacyl-tRNA + H2O = an N-acyl-L-amino acid + a tRNA + H(+). The natural substrate for this enzyme may be peptidyl-tRNAs which drop off the ribosome during protein synthesis. The sequence is that of Peptidyl-tRNA hydrolase from Methanocaldococcus jannaschii (strain ATCC 43067 / DSM 2661 / JAL-1 / JCM 10045 / NBRC 100440) (Methanococcus jannaschii).